Reading from the N-terminus, the 347-residue chain is D-alanine--D-alanine ligase (347 aa).

The ATP-grasp domain occupies 131 to 333 (KRVLESAGIA…YPELIERLVD (203 aa)). An ATP-binding site is contributed by 161 to 216 (EEKLAYPVFTKPSNMGSSVGISKSENQEELRQALKLAFRYDSRVLVEQGVNAREIE). Mg(2+) contacts are provided by aspartate 287, glutamate 300, and asparagine 302.

Belongs to the D-alanine--D-alanine ligase family. It depends on Mg(2+) as a cofactor. The cofactor is Mn(2+).

It is found in the cytoplasm. It catalyses the reaction 2 D-alanine + ATP = D-alanyl-D-alanine + ADP + phosphate + H(+). Its pathway is cell wall biogenesis; peptidoglycan biosynthesis. Functionally, cell wall formation. The protein is D-alanine--D-alanine ligase of Streptococcus pneumoniae (strain JJA).